The following is a 103-amino-acid chain: Pro-glucagon (103 aa).

Belongs to the glucagon family.

It localises to the secreted. In terms of biological role, plays a key role in glucose metabolism and homeostasis. Regulates blood glucose by increasing gluconeogenesis and decreasing glycolysis. In Aquarana catesbeiana (American bullfrog), this protein is Pro-glucagon (gcg).